The sequence spans 660 residues: Probable rhamnogalacturonate lyase B (660 aa).

An N-terminal signal peptide occupies residues 1-20 (MRLSVSLGLASLWTAIGATA). N-linked (GlcNAc...) asparagine glycans are attached at residues asparagine 22, asparagine 27, asparagine 109, asparagine 142, asparagine 238, asparagine 284, asparagine 432, asparagine 492, asparagine 532, asparagine 594, and asparagine 635.

Belongs to the polysaccharide lyase 4 family.

The protein localises to the secreted. The catalysed reaction is Endotype eliminative cleavage of L-alpha-rhamnopyranosyl-(1-&gt;4)-alpha-D-galactopyranosyluronic acid bonds of rhamnogalacturonan I domains in ramified hairy regions of pectin leaving L-rhamnopyranose at the reducing end and 4-deoxy-4,5-unsaturated D-galactopyranosyluronic acid at the non-reducing end.. Pectinolytic enzymes consist of four classes of enzymes: pectin lyase, polygalacturonase, pectin methylesterase and rhamnogalacturonase. Degrades the rhamnogalacturonan I (RG-I) backbone of pectin. The polypeptide is Probable rhamnogalacturonate lyase B (rglB) (Aspergillus terreus (strain NIH 2624 / FGSC A1156)).